Reading from the N-terminus, the 939-residue chain is Protein translocase subunit SecA (939 aa).

ATP-binding positions include Gln-85, 103 to 107, and Asp-504; that span reads GEGKT. The interval 850 to 939 is disordered; the sequence is PVQDGAERPS…KGGGGRRRKK (90 aa). Residues 854–864 are compositionally biased toward basic and acidic residues; the sequence is GAERPSLEKEG. Positions 924 to 939 are enriched in basic residues; the sequence is ERRKAQKGGGGRRRKK.

The protein belongs to the SecA family. As to quaternary structure, monomer and homodimer. Part of the essential Sec protein translocation apparatus which comprises SecA, SecYEG and auxiliary proteins SecDF. Other proteins may also be involved.

The protein resides in the cell membrane. It is found in the cytoplasm. It carries out the reaction ATP + H2O + cellular proteinSide 1 = ADP + phosphate + cellular proteinSide 2.. In terms of biological role, part of the Sec protein translocase complex. Interacts with the SecYEG preprotein conducting channel. Has a central role in coupling the hydrolysis of ATP to the transfer of proteins into and across the cell membrane, serving as an ATP-driven molecular motor driving the stepwise translocation of polypeptide chains across the membrane. This Streptomyces griseus subsp. griseus (strain JCM 4626 / CBS 651.72 / NBRC 13350 / KCC S-0626 / ISP 5235) protein is Protein translocase subunit SecA.